An 80-amino-acid chain; its full sequence is Translation initiation factor IF-1, chloroplastic (80 aa).

Positions 1–74 (MKEQKWIHEG…TRGRIIYRLR (74 aa)) constitute an S1-like domain.

This sequence belongs to the IF-1 family. Component of the 30S ribosomal translation pre-initiation complex which assembles on the 30S ribosome in the order IF-2 and IF-3, IF-1 and N-formylmethionyl-tRNA(fMet); mRNA recruitment can occur at any time during PIC assembly.

The protein resides in the plastid. Its subcellular location is the chloroplast. One of the essential components for the initiation of protein synthesis. Stabilizes the binding of IF-2 and IF-3 on the 30S subunit to which N-formylmethionyl-tRNA(fMet) subsequently binds. Helps modulate mRNA selection, yielding the 30S pre-initiation complex (PIC). Upon addition of the 50S ribosomal subunit IF-1, IF-2 and IF-3 are released leaving the mature 70S translation initiation complex. The protein is Translation initiation factor IF-1, chloroplastic of Illicium parviflorum (Yellow anise tree).